The sequence spans 152 residues: Inner membrane protein YbbJ (152 aa).

The helical transmembrane segment at 1-21 (MMELMVVHPHIFWLSLGGLLL) threads the bilayer. At 22–31 (AAEMLGGNGY) the chain is on the cytoplasmic side. The helical transmembrane segment at 32–52 (LLWSGVAAVITGLVVWLVPLG) threads the bilayer. Over 53 to 54 (WE) the chain is Periplasmic. A helical transmembrane segment spans residues 55 to 75 (WQGVMFAILTLLAAWLWWKWL). At 76-152 (SRRVREQKHS…ITLHIRAVSS (77 aa)) the chain is on the cytoplasmic side.

It to M.jannaschii MJ0826.

It localises to the cell inner membrane. This chain is Inner membrane protein YbbJ (ybbJ), found in Escherichia coli (strain K12).